A 101-amino-acid polypeptide reads, in one-letter code: uncharacterized protein (101 aa).

Helical transmembrane passes span 10–32, 45–67, and 77–99; these read FLPNFLLLGAGTALVLCLVFFLY, LGIWGSAVGLLMDTISLWNLPLI, and IAFTIWMVCAYCMYLLIPLILSH.

The protein resides in the cell membrane. This is an uncharacterized protein from Bacillus subtilis (strain 168).